The following is a 274-amino-acid chain: Light-independent protochlorophyllide reductase iron-sulfur ATP-binding protein (274 aa).

Residues 12–17 (GIGKST) and Lys-41 contribute to the ATP site. Position 16 (Ser-16) interacts with Mg(2+). The [4Fe-4S] cluster site is built by Cys-97 and Cys-131.

This sequence belongs to the NifH/BchL/ChlL family. Homodimer. Protochlorophyllide reductase is composed of three subunits; BchL, BchN and BchB. [4Fe-4S] cluster is required as a cofactor.

It catalyses the reaction chlorophyllide a + oxidized 2[4Fe-4S]-[ferredoxin] + 2 ADP + 2 phosphate = protochlorophyllide a + reduced 2[4Fe-4S]-[ferredoxin] + 2 ATP + 2 H2O. The protein operates within porphyrin-containing compound metabolism; bacteriochlorophyll biosynthesis (light-independent). Component of the dark-operative protochlorophyllide reductase (DPOR) that uses Mg-ATP and reduced ferredoxin to reduce ring D of protochlorophyllide (Pchlide) to form chlorophyllide a (Chlide). This reaction is light-independent. The L component serves as a unique electron donor to the NB-component of the complex, and binds Mg-ATP. This chain is Light-independent protochlorophyllide reductase iron-sulfur ATP-binding protein, found in Chloroherpeton thalassium (strain ATCC 35110 / GB-78).